An 845-amino-acid polypeptide reads, in one-letter code: Prickle-like protein 2 (845 aa).

Residues 18-126 (FDFQRSSTSD…NVRPFPVTMT (109 aa)) form the PET domain. The residue at position 92 (S92) is a Phosphoserine. LIM zinc-binding domains are found at residues 128 to 193 (AICE…CLKP), 193 to 253 (PRCA…LYAE), and 253 to 317 (EYCD…EDPN). 2 disordered regions span residues 314-346 (EDPN…NKGK) and 483-546 (YSDM…GSME). A compositionally biased stretch (polar residues) spans 318–327 (GSDSSDSAFQ). Residues S319, S321, and S322 each carry the phosphoserine modification. Residues T535, T537, and T540 each carry the phosphothreonine modification. Residues S544 and S547 each carry the phosphoserine modification. The tract at residues 558-581 (AEGGAKRQEHLSRFSMPDLSKDSG) is disordered. 2 positions are modified to phosphoserine: S608 and S643. Positions 642–700 (QSFDFDGGIASSKLPGQEGVHIQPMSERTRRRTTSRDDNRRFRPHRSRRSRRSRSDNAL) are disordered. Basic residues predominate over residues 683–693 (FRPHRSRRSRR). Position 732 is a phosphoserine (S732). The segment at 823–845 (STLGGRGQLHSRKRQKSKNCIIS) is disordered. C842 bears the Cysteine methyl ester mark. C842 is lipidated: S-farnesyl cysteine. A propeptide spans 843 to 845 (IIS) (removed in mature form).

Belongs to the prickle / espinas / testin family. In terms of tissue distribution, expressed in the hippocampus and cerebral cortex.

Its subcellular location is the nucleus membrane. This is Prickle-like protein 2 (Prickle2) from Mus musculus (Mouse).